A 417-amino-acid polypeptide reads, in one-letter code: RH-like protein IIF (417 aa).

11 consecutive transmembrane segments (helical) span residues 12 to 32, 44 to 64, 77 to 97, 125 to 145, 172 to 192, 203 to 223, 238 to 258, 265 to 285, 287 to 307, 331 to 351, and 358 to 378; these read CLPLCALTLEAALILLFYFFT, LVASYQVGQDLTVMAAIGFGF, VAFNLFMLALGVQWAILLDGF, ISAGAVLGYVNLVQLVVMVLV, FYLFTAYFGVTVAWCLPKPLP, TIPSLSAMLGALFLWMFWPSF, VFNTYYALAVSVVTAISGSSL, ISMTYVHSAVLAGGVAVGTSC, LIPSPWLAMVLGLVAGLISIG, NFSLLGLLGEIIYIVLVVRHT, and MIGFQVLLSMGELSLAIAIAL.

Belongs to the ammonium transporter (TC 2.A.49) family. Rh subfamily.

The protein resides in the membrane. May be part of an oligomeric complex which is likely to have a transport or channel function in the erythrocyte membrane. This chain is RH-like protein IIF, found in Pan troglodytes (Chimpanzee).